A 243-amino-acid chain; its full sequence is NifU-like scaffold protein (243 aa).

The protein belongs to the NifU family. In terms of assembly, homodimer.

It is found in the plastid. The protein resides in the apicoplast. It functions in the pathway cofactor biosynthesis; iron-sulfur cluster biosynthesis. Its function is as follows. Binds and transfers [4Fe-4S] iron-sulfur clusters to target proteins. This Plasmodium berghei (strain Anka) protein is NifU-like scaffold protein.